Reading from the N-terminus, the 622-residue chain is Probable potassium transport system protein Kup 2 (622 aa).

12 helical membrane passes run 9–29 (LSGV…TSPL), 46–66 (PASI…VVSV), 99–119 (TPLL…EVVI), 137–157 (PSLD…LFAI), 169–189 (FAPI…NSIF), 213–233 (ASFF…ALYA), 247–267 (WFMV…ALLL), 285–305 (ALLP…QAVI), 337–357 (IYIP…IMSF), 363–383 (LAAA…ILSC), 396–416 (LVAA…AANL), and 419–439 (IFSG…VMTS).

It belongs to the HAK/KUP transporter (TC 2.A.72) family.

It localises to the cell inner membrane. It catalyses the reaction K(+)(in) + H(+)(in) = K(+)(out) + H(+)(out). Transport of potassium into the cell. Likely operates as a K(+):H(+) symporter. This chain is Probable potassium transport system protein Kup 2, found in Aeromonas hydrophila subsp. hydrophila (strain ATCC 7966 / DSM 30187 / BCRC 13018 / CCUG 14551 / JCM 1027 / KCTC 2358 / NCIMB 9240 / NCTC 8049).